We begin with the raw amino-acid sequence, 237 residues long: Large ribosomal subunit protein bL25 (237 aa).

An N-terminal domain region spans residues 1 to 104 (MELTAKPRTP…SVPVHTTGRS (104 aa)). Residues 105-189 (QGEVQGGLVD…ELEAEVQAAQ (85 aa)) are middle domain. The interval 190 to 237 (VAGLVAAGELSEEAAEAVLEGDASLEEVKAEASEDNAGTDSEDNSDAQ) is C-terminal domain. A disordered region spans residues 205-237 (EAVLEGDASLEEVKAEASEDNAGTDSEDNSDAQ).

This sequence belongs to the bacterial ribosomal protein bL25 family. CTC subfamily. Part of the 50S ribosomal subunit. Contacts proteins L11 and L16, the A site tRNA, and the 5S and 23S rRNAs.

This is one of 3 proteins that mediate the attachment of the 5S rRNA onto the large ribosomal subunit. This protein has three domains. The N-terminal one is bound on the solvent face, the middle domain fills the space between the 5S rRNA and the L11 arm contacting the 23S rRNA while the C-terminal domain is on the edge of the intersubunit interface and contacts the A site. The protein conformation changes upon binding of a tRNA mimic to the A site, although the mimic does not interact directly with CTC itself, consistent with CTCs presumed role in moderating A site binding. The polypeptide is Large ribosomal subunit protein bL25 (rplY) (Deinococcus radiodurans (strain ATCC 13939 / DSM 20539 / JCM 16871 / CCUG 27074 / LMG 4051 / NBRC 15346 / NCIMB 9279 / VKM B-1422 / R1)).